The chain runs to 209 residues: Large ribosomal subunit protein uL3 (209 aa).

Positions 127-151 (SGGPSSHGSKFHRHLGGTGQATTPA) are disordered.

This sequence belongs to the universal ribosomal protein uL3 family. Part of the 50S ribosomal subunit. Forms a cluster with proteins L14 and L19.

In terms of biological role, one of the primary rRNA binding proteins, it binds directly near the 3'-end of the 23S rRNA, where it nucleates assembly of the 50S subunit. The protein is Large ribosomal subunit protein uL3 of Borrelia duttonii (strain Ly).